A 244-amino-acid polypeptide reads, in one-letter code: Tetraspanin-7 (244 aa).

Residues M1–K11 lie on the Cytoplasmic side of the membrane. The helical transmembrane segment at T12–G35 threads the bilayer. Topologically, residues K36–T51 are extracellular. An N-linked (GlcNAc...) asparagine glycan is attached at N49. Residues N52–F70 form a helical membrane-spanning segment. Over G71 to W81 the chain is Cytoplasmic. Residues M82–F107 traverse the membrane as a helical segment. Residues R108–M208 are Extracellular-facing. N-linked (GlcNAc...) asparagine glycans are attached at residues N150, N153, N172, and N183. A helical membrane pass occupies residues G209–A229. The Cytoplasmic portion of the chain corresponds to C230–V244.

The protein belongs to the tetraspanin (TM4SF) family.

The protein localises to the membrane. Its function is as follows. May be involved in cell proliferation and cell motility. The polypeptide is Tetraspanin-7 (TSPAN7) (Pongo pygmaeus (Bornean orangutan)).